Reading from the N-terminus, the 684-residue chain is Kinesin-like protein KIN-13B (684 aa).

Disordered regions lie at residues 1 to 31 (MSGRQRSVAAAVHHQRQLSDNPLDMSSSNGR) and 71 to 103 (GNEFFGEPTTPQYGARPTNQRKNNDESEFSPGL). 2 stretches are compositionally biased toward polar residues: residues 18 to 31 (LSDNPLDMSSSNGR) and 79 to 91 (TTPQYGARPTNQR). The region spanning 169–492 (KIKVVVRKRP…LRYADRVKSL (324 aa)) is the Kinesin motor domain. 258-265 (GQTGSGKT) provides a ligand contact to ATP. Residues 574–594 (KPTIQMKSRDMPRPDMKKSNS) form a disordered region. Basic and acidic residues predominate over residues 580–594 (KSRDMPRPDMKKSNS). A coiled-coil region spans residues 596–626 (DNLNALLQEEEDLVNAHRKQVEDTMNIVKEE).

This sequence belongs to the TRAFAC class myosin-kinesin ATPase superfamily. Kinesin family. KIN-13 subfamily.

In terms of biological role, acts redundantly with KIN13A to modulate cell wall synthesis and cell expansion via the THE1 pathway. This Arabidopsis thaliana (Mouse-ear cress) protein is Kinesin-like protein KIN-13B.